The primary structure comprises 349 residues: Gibberellin 3-beta-dioxygenase 3 (349 aa).

A Fe2OG dioxygenase domain is found at 201–305 (SIQSFLQLNS…RVSAAYFAGP (105 aa)). Fe cation-binding residues include His-226, Asp-228, and His-286. Arg-296 is an active-site residue.

The protein belongs to the iron/ascorbate-dependent oxidoreductase family. GA3OX subfamily. It depends on L-ascorbate as a cofactor. Fe cation serves as cofactor. Expressed in flower clusters and siliques.

The catalysed reaction is gibberellin A20 + 2-oxoglutarate + O2 = gibberellin A1 + succinate + CO2. The protein operates within plant hormone biosynthesis; gibberellin biosynthesis. Converts the inactive gibberellin (GA) precursors GA9 and GA20 in the bioactives gibberellins GA4 and GA1. Involved in the production of bioactive GA for reproductive development. The polypeptide is Gibberellin 3-beta-dioxygenase 3 (GA3OX3) (Arabidopsis thaliana (Mouse-ear cress)).